A 380-amino-acid polypeptide reads, in one-letter code: Putative RNA ligase (380 aa).

Putative RNA ligase. Is able to catalyze the adenylation reaction of ssDNA 3'-terminal phosphate (ssDNA 3'p) to 3'-adenylated DNA (ssDNA 3'pp5'A). This chain is Putative RNA ligase, found in Thermovibrio ammonificans (strain DSM 15698 / JCM 12110 / HB-1).